Here is a 498-residue protein sequence, read N- to C-terminus: Glutamyl-tRNA(Gln) amidotransferase subunit A (498 aa).

Catalysis depends on charge relay system residues Lys-79 and Ser-154. Catalysis depends on Ser-178, which acts as the Acyl-ester intermediate.

The protein belongs to the amidase family. GatA subfamily. As to quaternary structure, heterotrimer of A, B and C subunits.

The catalysed reaction is L-glutamyl-tRNA(Gln) + L-glutamine + ATP + H2O = L-glutaminyl-tRNA(Gln) + L-glutamate + ADP + phosphate + H(+). Allows the formation of correctly charged Gln-tRNA(Gln) through the transamidation of misacylated Glu-tRNA(Gln) in organisms which lack glutaminyl-tRNA synthetase. The reaction takes place in the presence of glutamine and ATP through an activated gamma-phospho-Glu-tRNA(Gln). The chain is Glutamyl-tRNA(Gln) amidotransferase subunit A from Psychrobacter cryohalolentis (strain ATCC BAA-1226 / DSM 17306 / VKM B-2378 / K5).